Consider the following 131-residue polypeptide: Profilin-10 (131 aa).

C13 and C115 are joined by a disulfide. Positions 81-97 match the Involved in PIP2 interaction motif; that stretch reads AVIRGKKGSGGITVKKT. T111 carries the post-translational modification Phosphothreonine.

It belongs to the profilin family. In terms of assembly, occurs in many kinds of cells as a complex with monomeric actin in a 1:1 ratio. In terms of processing, phosphorylated by MAP kinases.

The protein localises to the cytoplasm. It is found in the cytoskeleton. Its function is as follows. Binds to actin and affects the structure of the cytoskeleton. At high concentrations, profilin prevents the polymerization of actin, whereas it enhances it at low concentrations. The sequence is that of Profilin-10 from Zea mays (Maize).